We begin with the raw amino-acid sequence, 188 residues long: Elongation factor P-like protein (188 aa).

It belongs to the elongation factor P family.

The protein is Elongation factor P-like protein of Aliivibrio fischeri (strain MJ11) (Vibrio fischeri).